The sequence spans 405 residues: Arginine biosynthesis bifunctional protein ArgJ (405 aa).

Substrate-binding residues include threonine 152, lysine 178, threonine 189, glutamate 276, asparagine 400, and threonine 405. Threonine 189 (nucleophile) is an active-site residue.

This sequence belongs to the ArgJ family. In terms of assembly, heterotetramer of two alpha and two beta chains.

The protein localises to the cytoplasm. It catalyses the reaction N(2)-acetyl-L-ornithine + L-glutamate = N-acetyl-L-glutamate + L-ornithine. It carries out the reaction L-glutamate + acetyl-CoA = N-acetyl-L-glutamate + CoA + H(+). It functions in the pathway amino-acid biosynthesis; L-arginine biosynthesis; L-ornithine and N-acetyl-L-glutamate from L-glutamate and N(2)-acetyl-L-ornithine (cyclic): step 1/1. Its pathway is amino-acid biosynthesis; L-arginine biosynthesis; N(2)-acetyl-L-ornithine from L-glutamate: step 1/4. In terms of biological role, catalyzes two activities which are involved in the cyclic version of arginine biosynthesis: the synthesis of N-acetylglutamate from glutamate and acetyl-CoA as the acetyl donor, and of ornithine by transacetylation between N(2)-acetylornithine and glutamate. The chain is Arginine biosynthesis bifunctional protein ArgJ from Pseudomonas putida (strain ATCC 47054 / DSM 6125 / CFBP 8728 / NCIMB 11950 / KT2440).